We begin with the raw amino-acid sequence, 3364 residues long: Salivary gland surface protein 1 (3364 aa).

Beta-propeller stretches follow at residues 1 to 344 (MLRI…VVDA) and 705 to 1216 (FEQE…LKAL). An N-linked (GlcNAc...) asparagine glycan is attached at asparagine 59. 2 disulfides stabilise this stretch: cysteine 251-cysteine 297 and cysteine 1128-cysteine 1139. Positions 345-2733 (VEPKLDQGSP…PVSQIDPDGQ (2389 aa)) are rhs/YD-repeats. N-linked (GlcNAc...) asparagine glycosylation occurs at asparagine 1149. Residues 1345–1494 (NQELVQFLGF…VHVDHVRLSP (150 aa)) form a carbohydrate-binding module (CBM) region. The lectin carbohydrate-recognition domain (lectin-CRD) stretch occupies residues 1575 to 1715 (HSWVESFSPY…VGIKDVIVME (141 aa)). The interval 2225–2304 (HDKCDQNLIP…SEKMLEQGYP (80 aa)) is wedge domain. Cystine bridges form between cysteine 2253–cysteine 2285 and cysteine 2407–cysteine 2421. 5 helical membrane passes run 2734 to 2754 (IAVT…LGAA), 2774 to 2794 (IGLF…AATF), 2805 to 2825 (MIAG…LGAA), 2844 to 2864 (WNGL…FVGI), and 2878 to 2898 (MIYA…GGGM). The segment at 3126 to 3216 (YSPDSDGNQI…ARIAPAALRN (91 aa)) is tox-SGS.

Probably cleaved at the C-terminus. Female saliva (at protein level). Female salivary gland (at protein level). Not detected in female carcass without salivary glands. Not detected in male tissues.

Its subcellular location is the cell membrane. The protein localises to the secreted. (Microbial infection) Facilitates, but is not essential for, invasion of salivary glands by Plasmodium gallinaceum. Plays a role in Plasmodium gallinaceum oocyst development in mosquito midgut. Functionally, (Microbial infection) Probably facilitates Zika virus replication in salivary glands. The sequence is that of Salivary gland surface protein 1 from Aedes aegypti (Yellowfever mosquito).